The chain runs to 208 residues: Proteasome subunit beta 2 (208 aa).

A propeptide spans 1 to 9 (MSGKKIVSK) (removed in mature form; by autocatalysis). The active-site Nucleophile is the Thr10.

It belongs to the peptidase T1B family. In terms of assembly, the 20S proteasome core is composed of 14 alpha and 14 beta subunits that assemble into four stacked heptameric rings, resulting in a barrel-shaped structure. The two inner rings, each composed of seven catalytic beta subunits, are sandwiched by two outer rings, each composed of seven alpha subunits. The catalytic chamber with the active sites is on the inside of the barrel. Has a gated structure, the ends of the cylinder being occluded by the N-termini of the alpha-subunits. Is capped at one or both ends by the proteasome regulatory ATPase, PAN.

Its subcellular location is the cytoplasm. It catalyses the reaction Cleavage of peptide bonds with very broad specificity.. With respect to regulation, the formation of the proteasomal ATPase PAN-20S proteasome complex, via the docking of the C-termini of PAN into the intersubunit pockets in the alpha-rings, triggers opening of the gate for substrate entry. Interconversion between the open-gate and close-gate conformations leads to a dynamic regulation of the 20S proteasome proteolysis activity. Its function is as follows. Component of the proteasome core, a large protease complex with broad specificity involved in protein degradation. This Staphylothermus marinus (strain ATCC 43588 / DSM 3639 / JCM 9404 / F1) protein is Proteasome subunit beta 2.